The primary structure comprises 205 residues: Large ribosomal subunit protein uL4 (205 aa).

The interval 44-79 (RAGTKAQKTRREVSGSGAKPWRQKGTGRARAGSSRS) is disordered.

This sequence belongs to the universal ribosomal protein uL4 family. As to quaternary structure, part of the 50S ribosomal subunit.

Its function is as follows. One of the primary rRNA binding proteins, this protein initially binds near the 5'-end of the 23S rRNA. It is important during the early stages of 50S assembly. It makes multiple contacts with different domains of the 23S rRNA in the assembled 50S subunit and ribosome. In terms of biological role, forms part of the polypeptide exit tunnel. The chain is Large ribosomal subunit protein uL4 from Coxiella burnetii (strain Dugway 5J108-111).